The chain runs to 505 residues: Lysine--tRNA ligase (505 aa).

Over residues 1–11 the composition is skewed to polar residues; that stretch reads MSDQQLDQPSL. The interval 1–23 is disordered; it reads MSDQQLDQPSLSHEERQHEENKL. The span at 12-23 shows a compositional bias: basic and acidic residues; that stretch reads SHEERQHEENKL. Mg(2+)-binding residues include Glu-415 and Glu-422.

The protein belongs to the class-II aminoacyl-tRNA synthetase family. As to quaternary structure, homodimer. Requires Mg(2+) as cofactor.

The protein resides in the cytoplasm. It carries out the reaction tRNA(Lys) + L-lysine + ATP = L-lysyl-tRNA(Lys) + AMP + diphosphate. The protein is Lysine--tRNA ligase of Ectopseudomonas mendocina (strain ymp) (Pseudomonas mendocina).